The sequence spans 255 residues: Transcription factor CAULIFLOWER (255 aa).

Residues 1-61 form the MADS-box domain; that stretch reads MGRGRVELKR…GKLFEYSSES (61 aa). The K-box domain occupies 90-180; sequence QTNWSMEYSR…TKQIKERENI (91 aa). Residues 90-198 adopt a coiled-coil conformation; the sequence is QTNWSMEYSR…EQLNRSVDDV (109 aa).

As to quaternary structure, homodimer capable of binding to CArG-box sequences. In terms of tissue distribution, expressed in young flower primordia.

The protein resides in the nucleus. Its function is as follows. Probable transcription factor that promotes early floral meristem identity in synergy with APETALA1, FRUITFULL and LEAFY. Is required subsequently for the transition of an inflorescence meristem into a floral meristem. Seems to be partially redundant to the function of APETALA1. Positively regulates the APETALA1 and LEAFY expression. In Arabidopsis thaliana (Mouse-ear cress), this protein is Transcription factor CAULIFLOWER (CAL).